Consider the following 550-residue polypeptide: MTSRKILVTSALPYANGEIHLGHLLEYIQADIWVRFQKMMGNECYYVCADDTHGTPIMLKSDELGITPETLIKGVSERHQADFKEFSIGFSKYHSTHSQENKDISANIYHKLNDAGFIKTRIISQAFDPEKQMFLPDRFIKGDCPKCGANDQYGDNCEICGVTYSPTELKNAKSIISDATPIAKDSEHYFFDLPQFETQLKAWIKEGHLQDEVSNKLSEWFEQGLQQWDISRDAPYFGFQIPDVEGKYFYVWLDAPIGYMASFKKLCDEQGLDFDEYFNKDSNTELYHFIGKDIVYFHALFWPAILMGSNYRTPSAIFVHGFLTVNGQKMSKSRGTFIQARTYLNHLNPECLRYYYAYKLSAKIDDIDLNLTDFKQRVNSDLVGKVVNIASRSTGFLVKKFNKTLSDYAIDPELYHEFVACGDIIKKHYEARNYNQAMREIMKLADKANQYIDEHKPWQLVKKDTKQVHDVTSLAINLFRVLMTYLKPVLPVMAKQAEMFLNIDAFNWQDLKRPLTKHQINTFKPLMSRIEDEKIEQVIEASKQNMQVVA.

The short motif at 13-23 is the 'HIGH' region element; that stretch reads PYANGEIHLGH. Residues Cys-144, Cys-147, Cys-157, and Cys-160 each coordinate Zn(2+). The 'KMSKS' region motif lies at 329–333; sequence KMSKS. Residue Lys-332 participates in ATP binding.

Belongs to the class-I aminoacyl-tRNA synthetase family. MetG type 1 subfamily. As to quaternary structure, monomer. The cofactor is Zn(2+).

It localises to the cytoplasm. It catalyses the reaction tRNA(Met) + L-methionine + ATP = L-methionyl-tRNA(Met) + AMP + diphosphate. In terms of biological role, is required not only for elongation of protein synthesis but also for the initiation of all mRNA translation through initiator tRNA(fMet) aminoacylation. The protein is Methionine--tRNA ligase of Ruthia magnifica subsp. Calyptogena magnifica.